The following is an 835-amino-acid chain: Microcephalin (835 aa).

A BRCT 1 domain is found at 1-93 (MAAPILKDVV…AHIDESLFPA (93 aa)). A disordered region spans residues 184–206 (KEKRENLSPTSSQLIQQSHDNPS). Residues 190 to 206 (LSPTSSQLIQQSHDNPS) show a composition bias toward polar residues. 4 positions are modified to phosphoserine: serine 279, serine 287, serine 296, and serine 333. A Phosphothreonine modification is found at threonine 335. Basic residues predominate over residues 346 to 361 (HSRPRSSSVKRKRVSH). 2 disordered regions span residues 346-376 (HSRP…RKRS) and 418-442 (PDNL…PAQF). Position 548 is a phosphoserine (serine 548). The interval 557–582 (GLKSTQNRGTTSKISNSSEGEAQSEH) is disordered. Polar residues predominate over residues 559–577 (KSTQNRGTTSKISNSSEGE). 2 BRCT domains span residues 640–730 (SGRG…PFEL) and 751–833 (YRGT…NYLL).

Interacts with CDC27 and maybe other components of the APC/C complex. Interacts with histone variant H2AX under DNA damage conditions.

The protein resides in the cytoplasm. The protein localises to the cytoskeleton. It localises to the microtubule organizing center. Its subcellular location is the centrosome. Functionally, implicated in chromosome condensation and DNA damage induced cellular responses. May play a role in neurogenesis and regulation of the size of the cerebral cortex. This Gorilla gorilla gorilla (Western lowland gorilla) protein is Microcephalin.